The following is a 112-amino-acid chain: uncharacterized protein (112 aa).

The signal sequence occupies residues 1-25 (MKGTKLAVVVGMTVAAVSLAAPAQA).

This is an uncharacterized protein from Mycobacterium tuberculosis (strain CDC 1551 / Oshkosh).